The chain runs to 180 residues: Alpha-S2-casein-like A (180 aa).

The signal sequence occupies residues 1–15; sequence MRFFVFTCLLAVALA. Ser-23 and Ser-25 each carry phosphoserine. The interval 46–66 is disordered; it reads PTNQETPSVSSSEESVEVQTE.

The protein belongs to the alpha-casein family. As to expression, mammary gland specific. Secreted in milk.

It is found in the secreted. Important role in the capacity of milk to transport calcium phosphate. The chain is Alpha-S2-casein-like A (CSN1S2A) from Oryctolagus cuniculus (Rabbit).